Here is a 66-residue protein sequence, read N- to C-terminus: Large ribosomal subunit protein uL29 (66 aa).

It belongs to the universal ribosomal protein uL29 family.

The polypeptide is Large ribosomal subunit protein uL29 (Helicobacter pylori (strain HPAG1)).